Consider the following 700-residue polypeptide: Ribonucleoside-diphosphate reductase subunit alpha (700 aa).

Residues Thr153, 169–170 (SC), Gly198, 380–384 (NLCSE), and 580–584 (PTGSI) contribute to the substrate site. A disulfide bond links Cys170 and Cys409. Asn380 serves as the catalytic Proton acceptor. The active-site Cysteine radical intermediate is Cys382. Catalysis depends on Glu384, which acts as the Proton acceptor.

The protein belongs to the ribonucleoside diphosphate reductase large chain family. In terms of assembly, tetramer of two alpha and two beta subunits.

The enzyme catalyses a 2'-deoxyribonucleoside 5'-diphosphate + [thioredoxin]-disulfide + H2O = a ribonucleoside 5'-diphosphate + [thioredoxin]-dithiol. With respect to regulation, under complex allosteric control mediated by deoxynucleoside triphosphates and ATP binding. The type of nucleotide bound at the specificity site determines substrate preference. It seems probable that ATP makes the enzyme reduce CDP and UDP, dGTP favors ADP reduction and dTTP favors GDP reduction. Provides the precursors necessary for DNA synthesis. Catalyzes the biosynthesis of deoxyribonucleotides from the corresponding ribonucleotides. This Bacillus subtilis (strain 168) protein is Ribonucleoside-diphosphate reductase subunit alpha.